We begin with the raw amino-acid sequence, 334 residues long: AT-hook motif nuclear-localized protein 2 (334 aa).

Residues 1-21 (METTGEVVKTTTGSDGGVTVV) show a composition bias toward low complexity. Disordered stretches follow at residues 1-103 (METT…PTTS) and 109-128 (STTS…PSSF). A compositionally biased stretch (pro residues) spans 44 to 54 (SVAPPPPPPPQ). Positions 71–80 (IKKRRGRPRK) are enriched in basic residues. The Bipartite nuclear localization signal motif lies at 72 to 80 (KKRRGRPRK). The a.T hook DNA-binding region spans 72–84 (KKRRGRPRKYGHD). Residues 90–103 (LSPNPISSAAPTTS) show a composition bias toward polar residues. The PPC domain maps to 147–287 (AANFTPHIIT…PHNHNFMSSP (141 aa)). Residues 306–319 (SSLPISTWTPSFPS) show a composition bias toward polar residues. The tract at residues 306-334 (SSLPISTWTPSFPSDSRHKHSHDFNITLT) is disordered.

It localises to the nucleus. Functionally, transcription factor that specifically binds AT-rich DNA sequences related to the nuclear matrix attachment regions (MARs). This is AT-hook motif nuclear-localized protein 2 from Arabidopsis thaliana (Mouse-ear cress).